We begin with the raw amino-acid sequence, 413 residues long: Histidine--tRNA ligase (413 aa).

The protein belongs to the class-II aminoacyl-tRNA synthetase family. In terms of assembly, homodimer.

The protein localises to the cytoplasm. The enzyme catalyses tRNA(His) + L-histidine + ATP = L-histidyl-tRNA(His) + AMP + diphosphate + H(+). This chain is Histidine--tRNA ligase, found in Geobacter sulfurreducens (strain ATCC 51573 / DSM 12127 / PCA).